The sequence spans 132 residues: Small ribosomal subunit protein uS8 (132 aa).

The protein belongs to the universal ribosomal protein uS8 family. As to quaternary structure, part of the 30S ribosomal subunit. Contacts proteins S5 and S12.

Its function is as follows. One of the primary rRNA binding proteins, it binds directly to 16S rRNA central domain where it helps coordinate assembly of the platform of the 30S subunit. This chain is Small ribosomal subunit protein uS8, found in Bacillus pumilus (strain SAFR-032).